Consider the following 538-residue polypeptide: Syncytin-2 (538 aa).

The signal sequence occupies residues 1 to 15 (MGLLLLLLILTPLLA). Over 16 to 478 (AYCHPDFRLL…GWLNWEGTWK (463 aa)) the chain is Extracellular. The CXXC motif lies at 43-46 (CWLC). 3 disulfides stabilise this stretch: Cys43–Cys46, Cys43–Cys439, and Cys431–Cys438. Asn146, Asn177, Asn220, Asn241, Asn247, Asn312, and Asn332 each carry an N-linked (GlcNAc...) asparagine glycan. The tract at residues 354–374 (LIPLLVGLGIVGSAGTGIAGI) is fusion peptide. Positions 414 to 430 (LQNRRGLDMLTAAQGGI) match the CKS-17 motif. The short motif at 431 to 439 (CLALDEKCC) is the CX6CC element. Asn443 is a glycosylation site (N-linked (GlcNAc...) asparagine). A helical membrane pass occupies residues 479 to 499 (WFSWVLPFTGPLVSLLLLLLF). Residues 500–538 (GPCLLNLITQFVSSRLQATKLQMKLNKRVHPRNSQESPF) lie on the Cytoplasmic side of the membrane.

This sequence belongs to the gamma type-C retroviral envelope protein family. HERV class-I FRD env subfamily. As to quaternary structure, the surface and transmembrane proteins form a heterodimer. They are attached by non-covalent interactions or by a labile interchain disulfide bond. In terms of processing, specific enzymatic cleavages in vivo yield the mature SU and TM proteins. The CXXC motif is highly conserved across a broad range of retroviral envelope proteins. It is thought to participate in the formation of a labile disulfide bond possibly with the CX6CC motif present in the transmembrane protein.

It localises to the virion. The protein localises to the cell membrane. This endogenous retroviral envelope protein has retained its original fusogenic properties and participates in trophoblast fusion and the formation of a syncytium during placenta morphogenesis. The interaction with MFSD2A is apparently important for this process. Functionally, endogenous envelope proteins may have kept, lost or modified their original function during evolution but this one can still make pseudotypes with MLV, HIV-1 or SIV-1 virions and confer infectivity. Retroviral envelope proteins mediate receptor recognition and membrane fusion during early infection. The surface protein mediates receptor recognition, while the transmembrane protein anchors the envelope heterodimer to the viral membrane through one transmembrane domain. The other hydrophobic domain, called fusion peptide, mediates fusion of the viral membrane with the target cell membrane. The chain is Syncytin-2 (ERVFRD-1) from Callithrix jacchus (White-tufted-ear marmoset).